The sequence spans 738 residues: Glycogen [starch] synthase, muscle (738 aa).

At S8 the chain carries Phosphoserine; by AMPK and PKA. Residue S11 is modified to Phosphoserine. K39 is a UDP binding site. UDP-alpha-D-glucose contacts are provided by H205 and R211. Residues H291, E292, Q294, H297, and K301 each coordinate alpha-D-glucose 6-phosphate. R331 is a binding site for UDP. Residue R331 coordinates UDP-alpha-D-glucose. A Phosphoserine modification is found at S412. Position 501 (H501) interacts with alpha-D-glucose 6-phosphate. 3 residues coordinate UDP-alpha-D-glucose: E510, W512, and G513. T515 is a binding site for UDP. Residues R582 and R586 each coordinate alpha-D-glucose 6-phosphate. The tract at residues 632-738 (QGYRYPRPAS…PTSSLGEERN (107 aa)) is disordered. Phosphoserine occurs at positions 641 and 645. S649 carries the post-translational modification Phosphoserine; by GSK3-alpha and GSK3-beta. Residues S652, S653, S657, and S672 each carry the phosphoserine modification. The segment covering 682 to 695 (AKDRRNIRAPEWPR) has biased composition (basic and acidic residues). Phosphoserine is present on residues S698, S709, and S711. Residues 698 to 738 (SCSSSTGGSKRSNSVDTGPSSSLSTPTEPLSPTSSLGEERN) are compositionally biased toward low complexity. T722 is modified (phosphothreonine). S728 and S732 each carry phosphoserine.

The protein belongs to the glycosyltransferase 3 family. Part of the GYS1-GYG1 complex, a heterooctamer composed of a tetramer of GYS1 and 2 dimers of GYG1, where each GYS1 protomer binds to one GYG1 subunit (via GYG1 C-terminus); the GYS1 tetramer may dissociate from GYG1 dimers to continue glycogen polymerization on its own. Phosphorylation at Ser-8 by AMPK inactivates the enzyme activity. Primed phosphorylation at Ser-657 (site 5) by CSNK2A1 and CSNK2A2 is required for inhibitory phosphorylation at Ser-641 (site 3a), Ser-645 (site 3b), Ser-649 (site 3c) and Ser-653 (site 4) by GSK3A an GSK3B. Phosphorylated at Ser-641 by PASK, leading to inactivation; phosphorylation by PASK is inhibited by glycogen. Phosphorylated at Ser-641 by DYRK2, leading to inactivation. Dephosphorylation at Ser-641 and Ser-645 by PP1 activates the enzyme.

The catalysed reaction is [(1-&gt;4)-alpha-D-glucosyl](n) + UDP-alpha-D-glucose = [(1-&gt;4)-alpha-D-glucosyl](n+1) + UDP + H(+). It participates in glycan biosynthesis; glycogen biosynthesis. With respect to regulation, allosteric activation by glucose-6-phosphate. Phosphorylation reduces the activity towards UDP-glucose. When in the non-phosphorylated state, glycogen synthase does not require glucose-6-phosphate as an allosteric activator; when phosphorylated it does. Glycogen synthase participates in the glycogen biosynthetic process along with glycogenin and glycogen branching enzyme. Extends the primer composed of a few glucose units formed by glycogenin by adding new glucose units to it. In this context, glycogen synthase transfers the glycosyl residue from UDP-Glc to the non-reducing end of alpha-1,4-glucan. In Rattus norvegicus (Rat), this protein is Glycogen [starch] synthase, muscle (Gys1).